The primary structure comprises 445 residues: Fasciclin-like arabinogalactan protein 16 (445 aa).

A signal peptide spans 1–23 (MDSSYGATKFLLLLFLTTSIATA). 2 FAS1 domains span residues 35 to 173 (NSNS…ERLL) and 257 to 400 (VKDF…DGVL). N72 and N279 each carry an N-linked (GlcNAc...) asparagine glycan.

It belongs to the fasciclin-like AGP family.

It is found in the secreted. In terms of biological role, may be a cell surface adhesion protein. The sequence is that of Fasciclin-like arabinogalactan protein 16 (FLA16) from Arabidopsis thaliana (Mouse-ear cress).